Consider the following 447-residue polypeptide: MDLGKDQSLSKLHQTPDHHQEESHVPEVIGTWSLRNREQLRKRKAEAQEKQTSQWQYREKKHKRQRTGKRSERGRKRQQNTEMKVELPSQLEKEMMEKAPAPGEKEIEPPGSVTEVLLPAVSPQRVAPAKHLSEVGQESVTLQENSSEYQATAVQNQPSEICQDMAESEDLSPKMCQEIAIFQDQPFKMFRNMAQPEDVSPKTCQEDIAAKVLSSKTSEDTTDLEECSLEAHPKPDMPKASTLETYQKRPEPEEPDSETGQGIVETESFVSNTQQEMAVPKELATEIHQETVEPEHFSHKIYREIAMSKDPSHKTTQETSVPDKYPPEMYQETPGSEEYSLEIYQETTGPEAYAPEIYQETPGPEDLSTKTYKDKDVPKECFPKLYQEIGGPQDQDSKAHQEDAKDVYTFPQEMKENPKAEEPEIIEIPNVPQESNPENDIYSYVLF.

The segment at 1–91 (MDLGKDQSLS…EMKVELPSQL (91 aa)) is disordered. Residues 7 to 86 (QSLSKLHQTP…RQQNTEMKVE (80 aa)) form a necessary for nuclear localization region. Basic and acidic residues-rich tracts occupy residues 14-25 (QTPDHHQEESHV) and 35-49 (RNRE…EAQE). Residues 59–78 (EKKHKRQRTGKRSERGRKRQ) are compositionally biased toward basic residues. A phosphoserine mark is found at Ser-89 and Ser-122. A disordered region spans residues 137–156 (QESVTLQENSSEYQATAVQN). The residue at position 200 (Ser-200) is a Phosphoserine. 2 disordered regions span residues 210 to 280 (AKVL…MAVP) and 306 to 337 (AMSK…PGSE). Residue Thr-217 is modified to Phosphothreonine. The span at 306–316 (AMSKDPSHKTT) shows a compositional bias: basic and acidic residues.

The protein localises to the nucleus. In terms of biological role, regulates the proliferation and differentiation of hematopoietic cells. Overexpression block the TPA-induced megakaryocytic differentiation in the K562 cell model. May also prevent cell apoptosis through the activation of the nuclear factor-kappa B (NF-kB). This Bos taurus (Bovine) protein is Hemogen (HEMGN).